We begin with the raw amino-acid sequence, 276 residues long: 3-methyl-2-oxobutanoate hydroxymethyltransferase (276 aa).

2 residues coordinate Mg(2+): Asp49 and Asp88. 3-methyl-2-oxobutanoate contacts are provided by residues 49-50, Asp88, and Lys118; that span reads DS. A Mg(2+)-binding site is contributed by Glu120. The active-site Proton acceptor is Glu187.

This sequence belongs to the PanB family. Homodecamer; pentamer of dimers. It depends on Mg(2+) as a cofactor.

The protein localises to the cytoplasm. The catalysed reaction is 3-methyl-2-oxobutanoate + (6R)-5,10-methylene-5,6,7,8-tetrahydrofolate + H2O = 2-dehydropantoate + (6S)-5,6,7,8-tetrahydrofolate. It functions in the pathway cofactor biosynthesis; (R)-pantothenate biosynthesis; (R)-pantoate from 3-methyl-2-oxobutanoate: step 1/2. Functionally, catalyzes the reversible reaction in which hydroxymethyl group from 5,10-methylenetetrahydrofolate is transferred onto alpha-ketoisovalerate to form ketopantoate. The chain is 3-methyl-2-oxobutanoate hydroxymethyltransferase from Afipia carboxidovorans (strain ATCC 49405 / DSM 1227 / KCTC 32145 / OM5) (Oligotropha carboxidovorans).